The following is a 425-amino-acid chain: Alpha-muurolene synthase (425 aa).

Mg(2+) is bound by residues Asp97, Asp101, Asn240, Ser244, and Glu248. Positions 97-101 (DNISD) match the DDXXD motif motif. Residues 348 to 382 (VAPPPPPPPPTPPPQSSDADTKKQKVKAQDGKGPV) are disordered. Positions 349 to 362 (APPPPPPPPTPPPQ) are enriched in pro residues. Positions 366-377 (ADTKKQKVKAQD) are enriched in basic and acidic residues.

This sequence belongs to the terpene synthase family. Requires Mg(2+) as cofactor.

The catalysed reaction is (2E,6E)-farnesyl diphosphate = alpha-muurolene + diphosphate. It catalyses the reaction (2E,6E)-farnesyl diphosphate = gamma-muurolene + diphosphate. The enzyme catalyses (2E,6E)-farnesyl diphosphate = (+)-(R)-germacrene A + diphosphate. In terms of biological role, sesquiterpene synthase that catalyzes the formation of alpha-muurolene, and at lower level (+)-(R)-germacrene A and gamma-muurolene. This is Alpha-muurolene synthase (COP3) from Coprinopsis cinerea (strain Okayama-7 / 130 / ATCC MYA-4618 / FGSC 9003) (Inky cap fungus).